Consider the following 411-residue polypeptide: Proline-responsive transcriptional activator PutR (411 aa).

The protein belongs to the CdaR family.

Functionally, activates transcription of the putBCP operon. Requires proline as a coactivator. The polypeptide is Proline-responsive transcriptional activator PutR (Bacillus subtilis (strain 168)).